Reading from the N-terminus, the 901-residue chain is Pyruvate, phosphate dikinase (901 aa).

The tract at residues 1–321 (MNIAKSIHFL…WLIEQKPVEA (321 aa)) is N-terminal. The segment at 322–380 (KSTISLVRLLLDLYEREVVDAEYVVKSVKPGQLNEILHPVIDMTSVTGLKSSQGGIIGV) is linker 1. A central region spans residues 381 to 482 (PGAAVGRVYF…TINEGDFVTL (102 aa)). S440 is modified (phosphoserine; by PDRP1). H442 serves as the catalytic Tele-phosphohistidine intermediate. Residues 483-522 (NVPYYGESTLYMGAAQLIEPDPETSGLVSFIELAKGFVRS) form a linker 2 region. The segment at 523–901 (FHVRANADSP…SAKSGGRRAR (379 aa)) is C-terminal. Residues R550, R606, E750, G771, T772, N773, and D774 each coordinate substrate. Residue E750 participates in Mg(2+) binding. A Mg(2+)-binding site is contributed by D774. C835 functions as the Proton donor in the catalytic mechanism. The interval 879 to 901 (EKEGRKPAWRGRSSAKSGGRRAR) is disordered.

The protein belongs to the PEP-utilizing enzyme family. Homodimer. Mg(2+) is required as a cofactor. In terms of processing, phosphorylation of Ser-440 in the dark inactivates the enzyme. Dephosphorylation upon light stimulation reactivates the enzyme.

It carries out the reaction pyruvate + phosphate + ATP = phosphoenolpyruvate + AMP + diphosphate + H(+). Activated by light-induced dephosphorylation. Inhibited by dark-induced phosphorylation. Both reactions are catalyzed by PDRP1. Catalyzes the reversible phosphorylation of pyruvate and phosphate. The chain is Pyruvate, phosphate dikinase (ppdK) from Treponema pallidum (strain Nichols).